We begin with the raw amino-acid sequence, 105 residues long: Serine protease inhibitor Kazal-type 6 (105 aa).

The signal sequence occupies residues 1–23 (MKVAGVFLLLSLALLCFFSGAFS). Gln24 carries the post-translational modification Pyrrolidone carboxylic acid. The Kazal-like domain maps to 49–105 (RLFQINCGEFRDPKVFCTRESDPLCGSDGQTYGNKCAFCKALEKSSGKINLKHRGKC). Disulfide bonds link Cys55/Cys87, Cys65/Cys84, and Cys73/Cys105.

Expressed in the upper epidermis and in skin appendages.

It is found in the secreted. Functionally, serine protease inhibitor selective for kallikreins. Efficiently inhibits KLK5 and human KLK2, KLK4, KLK5, KLK6, KLK7, KLK12, KLK13 and KLK14. Doesn't inhibit human KLK1 and KLK8. The protein is Serine protease inhibitor Kazal-type 6 (Spink6) of Mus musculus (Mouse).